A 235-amino-acid polypeptide reads, in one-letter code: Phosphoribosylaminoimidazole-succinocarboxamide synthase (235 aa).

The protein belongs to the SAICAR synthetase family.

The catalysed reaction is 5-amino-1-(5-phospho-D-ribosyl)imidazole-4-carboxylate + L-aspartate + ATP = (2S)-2-[5-amino-1-(5-phospho-beta-D-ribosyl)imidazole-4-carboxamido]succinate + ADP + phosphate + 2 H(+). It participates in purine metabolism; IMP biosynthesis via de novo pathway; 5-amino-1-(5-phospho-D-ribosyl)imidazole-4-carboxamide from 5-amino-1-(5-phospho-D-ribosyl)imidazole-4-carboxylate: step 1/2. In Streptococcus mutans serotype c (strain ATCC 700610 / UA159), this protein is Phosphoribosylaminoimidazole-succinocarboxamide synthase.